The following is a 578-amino-acid chain: MSLLAHLQHQGLRQIVLCPGSRSAPLALAAGGLARQGELTLVTAIDERSAAFHALGLAQASGRATAVITTSGTAVANLLPAAVEADRSCIPLLLLTADRPTRLKDCGANQTVNQEQFLAPVCRAFLSSPGEGLHHENDVQLQSLASSLWERALGSAGPVHLNLPFEEPLHPSEAEQQAFWSAWQPLPAAGGEHHPAEPRSTPWDGPVPDWSRPGVVVAGPWRGLEADRPAYQRALQELALTTGWPVLLDPLAAAPQDLPGVIRHWDLMLPAGLPTPERSLQVLRLGPLPASRRLEAWLRALGPGQWLISEGDCRSLDPLGLASQCSLGLASWWDCVSPNPLSLAPGPSSLLTAWRDLEAAVAGELARQLPQAGPVSEPALMHVLPQLLPPALPVMLAASSPVRDWQAFAAADAGQRRCFSFRGASGIDGTLSLAVGLSRELGPLVLLTGDLALLHDSNGWLLASASAPPLLVLLIDNGGGGIFGQLPIPTAPAAAFDHLFAMPQAVDPLALARAHAVPTRQLASLEDLPQALEWGLDQRRAVLLRVCTNRGADAALRQMLRREVEQALCVVQGSTKEG.

The segment at 186-208 is disordered; sequence LPAAGGEHHPAEPRSTPWDGPVP.

Belongs to the TPP enzyme family. MenD subfamily. In terms of assembly, homodimer. Mg(2+) is required as a cofactor. Requires Mn(2+) as cofactor. It depends on thiamine diphosphate as a cofactor.

It catalyses the reaction isochorismate + 2-oxoglutarate + H(+) = 5-enolpyruvoyl-6-hydroxy-2-succinyl-cyclohex-3-ene-1-carboxylate + CO2. It participates in quinol/quinone metabolism; 1,4-dihydroxy-2-naphthoate biosynthesis; 1,4-dihydroxy-2-naphthoate from chorismate: step 2/7. Its pathway is cofactor biosynthesis; phylloquinone biosynthesis. Functionally, catalyzes the thiamine diphosphate-dependent decarboxylation of 2-oxoglutarate and the subsequent addition of the resulting succinic semialdehyde-thiamine pyrophosphate anion to isochorismate to yield 2-succinyl-5-enolpyruvyl-6-hydroxy-3-cyclohexene-1-carboxylate (SEPHCHC). In Synechococcus sp. (strain WH7803), this protein is 2-succinyl-5-enolpyruvyl-6-hydroxy-3-cyclohexene-1-carboxylate synthase.